The primary structure comprises 429 residues: Trehalose-phosphate phosphatase (429 aa).

D181 acts as the Nucleophile in catalysis. The Mg(2+) site is built by D181, D183, and D368. 181 to 183 (DFD) serves as a coordination point for substrate.

The protein belongs to the trehalose phosphatase family. It depends on Mg(2+) as a cofactor.

It carries out the reaction alpha,alpha-trehalose 6-phosphate + H2O = alpha,alpha-trehalose + phosphate. It functions in the pathway glycan biosynthesis; trehalose biosynthesis. Removes the phosphate from trehalose 6-phosphate to produce free trehalose. This Mycobacterium leprae (strain TN) protein is Trehalose-phosphate phosphatase (otsB).